A 193-amino-acid polypeptide reads, in one-letter code: Ion-translocating oxidoreductase complex subunit A (193 aa).

6 helical membrane passes run 4–24 (FLLLLIGTVLVNNFVLVQFLG), 39–59 (IGMSMATTFVLTLASLSSYLV), 63–83 (ILLPLGIEYLRTLSFILVIAV), 102–122 (LLGIFLPLITTNCAVLGVALL), 134–154 (VIYGFGAAVGFSLVLILFAAM), and 171–191 (SISMITAGLMSLAFLGFTGLV).

It belongs to the NqrDE/RnfAE family. In terms of assembly, the complex is composed of six subunits: RnfA, RnfB, RnfC, RnfD, RnfE and RnfG.

The protein resides in the cell inner membrane. In terms of biological role, part of a membrane-bound complex that couples electron transfer with translocation of ions across the membrane. This chain is Ion-translocating oxidoreductase complex subunit A, found in Pseudoalteromonas atlantica (strain T6c / ATCC BAA-1087).